We begin with the raw amino-acid sequence, 448 residues long: Protein chibby homolog 2 (448 aa).

Phosphoserine occurs at positions 41, 86, 89, 97, 124, 144, 148, and 150. The stretch at 164 to 198 forms a coiled coil; that stretch reads KECMLQEENKSLREENKALREENRMLSKENKILQV. Phosphoserine occurs at positions 212 and 225. A coiled-coil region spans residues 242–267; it reads KEDSTLQLLREENRALQQLLEQKQAY. Positions 270 to 323 are disordered; sequence QAEDTAAPAEESKPAPSPHEEPCSPGLLQDQGSGLSSRFEEPKGPPARQEDSKE. Basic and acidic residues-rich tracts occupy residues 279 to 291 and 307 to 323; these read EESK…HEEP and RFEE…DSKE. Phosphoserine is present on residues Ser-335 and Ser-338. Residues 356–414 are a coiled coil; that stretch reads LQLLREMRQALQALLKENRLLQEENRTLQVLRAEHRGFQEENKALWENNKLKLQQKLVI.

It belongs to the chibby family. SPERT subfamily. Homodimer. Binds to NEK1. Testis-specific.

The polypeptide is Protein chibby homolog 2 (Homo sapiens (Human)).